The sequence spans 372 residues: Glutamate 5-kinase (372 aa).

K14 contacts ATP. Residues S54, D141, and N153 each contribute to the substrate site. An ATP-binding site is contributed by 173–174 (TD). Residues 280–358 (RGTLVLDDGA…DAIESLLGYS (79 aa)) form the PUA domain.

The protein belongs to the glutamate 5-kinase family.

The protein localises to the cytoplasm. The enzyme catalyses L-glutamate + ATP = L-glutamyl 5-phosphate + ADP. The protein operates within amino-acid biosynthesis; L-proline biosynthesis; L-glutamate 5-semialdehyde from L-glutamate: step 1/2. Functionally, catalyzes the transfer of a phosphate group to glutamate to form L-glutamate 5-phosphate. The chain is Glutamate 5-kinase from Pseudomonas entomophila (strain L48).